The primary structure comprises 390 residues: Queuine tRNA-ribosyltransferase (390 aa).

Residue Asp92 is the Proton acceptor of the active site. Substrate-binding positions include 92 to 96 (DSGGF), Asp146, Gln195, and Gly222. Positions 253-259 (GVGTPED) are RNA binding. Residue Asp272 is the Nucleophile of the active site. The interval 277-281 (TRNAR) is RNA binding; important for wobble base 34 recognition. Zn(2+) contacts are provided by Cys310, Cys312, Cys315, and His354.

It belongs to the queuine tRNA-ribosyltransferase family. Homodimer. Within each dimer, one monomer is responsible for RNA recognition and catalysis, while the other monomer binds to the replacement base PreQ1. Zn(2+) is required as a cofactor.

It carries out the reaction 7-aminomethyl-7-carbaguanine + guanosine(34) in tRNA = 7-aminomethyl-7-carbaguanosine(34) in tRNA + guanine. It participates in tRNA modification; tRNA-queuosine biosynthesis. Its function is as follows. Catalyzes the base-exchange of a guanine (G) residue with the queuine precursor 7-aminomethyl-7-deazaguanine (PreQ1) at position 34 (anticodon wobble position) in tRNAs with GU(N) anticodons (tRNA-Asp, -Asn, -His and -Tyr). Catalysis occurs through a double-displacement mechanism. The nucleophile active site attacks the C1' of nucleotide 34 to detach the guanine base from the RNA, forming a covalent enzyme-RNA intermediate. The proton acceptor active site deprotonates the incoming PreQ1, allowing a nucleophilic attack on the C1' of the ribose to form the product. After dissociation, two additional enzymatic reactions on the tRNA convert PreQ1 to queuine (Q), resulting in the hypermodified nucleoside queuosine (7-(((4,5-cis-dihydroxy-2-cyclopenten-1-yl)amino)methyl)-7-deazaguanosine). This is Queuine tRNA-ribosyltransferase from Acidovorax ebreus (strain TPSY) (Diaphorobacter sp. (strain TPSY)).